Reading from the N-terminus, the 163-residue chain is uncharacterized protein (163 aa).

Residues Gln-136 to Arg-161 adopt a coiled-coil conformation.

This is an uncharacterized protein from Acanthamoeba polyphaga (Amoeba).